A 561-amino-acid polypeptide reads, in one-letter code: Potassium-transporting ATPase potassium-binding subunit (561 aa).

Helical transmembrane passes span 5-25, 60-80, 86-106, 131-151, 177-197, 247-267, 281-301, 376-396, 415-435, 489-509, and 531-551; these read LAAG…YVPL, CGYA…LYVL, VLPL…NTAV, GLAV…VALI, ILLP…VIQS, PTPL…VALT, LTVL…TTAA, GLYG…LLVG, ALAV…TVVL, LGLC…ALAG, and FAGL…FPVL.

It belongs to the KdpA family. The system is composed of three essential subunits: KdpA, KdpB and KdpC.

It is found in the cell membrane. Functionally, part of the high-affinity ATP-driven potassium transport (or Kdp) system, which catalyzes the hydrolysis of ATP coupled with the electrogenic transport of potassium into the cytoplasm. This subunit binds the extracellular potassium ions and delivers the ions to the membrane domain of KdpB through an intramembrane tunnel. This chain is Potassium-transporting ATPase potassium-binding subunit, found in Nocardia farcinica (strain IFM 10152).